Reading from the N-terminus, the 1343-residue chain is MVYSYSEKKRIRKDFGKRPKVLDIPYLLSIQLDSFKKFTDHDPTGERGLEAAFRSVFPIKSFSGYSELQYVSYKLGEPVFDVKECQIRGVTYSAPLRVKLRMVLFDREAAAGTVKDIKEQEVYMGDIPMMTNNGTFVINGTERVIVSQLHRSPGVFFDHDRGKTHSSGKVLYNARIIPYRGSWLDFEFDPKDALFVRIDRRRKLPATIILRALEYSTQDILDLFFERIEFKIKKDSLVMALVPDRLRGETAGYDIKDAEGALLVEAGRRITARHIKQLEKTNTTELEVPVDYIVGKYAAQDYIDEDTGEVLVTANSEITLEDLAKLSLAGIKNIDTLFINDLDHGAYIADTLRIDSTTNRLEALVEIYRMMRPGEPPTKDAAEGLFQNLFFSEERYDLSKVGRMKFNRRLEIAEDEGNGVLSKEDIVSVMKKIIEIRNGYDEVDDIDHLGNRRIRSVGEMAENQFRVGLVRVERAVRERLSLGDLNELMPQDLINAKPISAAVKEFFGSSQLSQFMDQNNPLSEVTHKRRISALGPGGLTRERAGFEVRDVHPTHYGRLCPIETPEGPNIGLINSLASFARTNSYGFLETPYRKVVDGVITDDVEYLSAIEEGRYVIAQANIEVDADGRMAEEQIACRHKGESTFMRAADVQYMDVSPQQIISVAASLIPFLEHDDANRALMGANMQRQAVPTLRADKPLVGTGIERTLAVDSGVVVAAKRGGVVDYVDASRIVVKVNEDELHAGEAGIDIYNLTKYTRSNQNTCINQRPCCSVGEPVVRGDVLADGPSTDLGDLALGQNMRIAFMPWNGYNFEDSILISERVAQEDRFTTIHIQELSCIARDTKLGSEEITADIPNVGESALSKLDESGIVYIGAEVKGGDILVGKVTPKGETQLTPEEKLLRAIFGEKASDVKDSSLRVPNSVKGTIIDVQVFTRDGVEKDKRALEIEDMHVRQARKDLGEEFKILEEGVLGRARNLLLSVGYSEAKLAEIPRKDVLIQVIDDETKQTELEQLAEQHEELKADFDKTFEIKRRKITQGDDLAPGVLKIVKVYLAVKRTIQPGDKMAGRHGNKGVISKICPVEDMPYDEEGNPVDIVLNPLGVPSRMNIGQVLEVHMGAAAKGIGNKITAMLEEQREIAELRGYIKQVYELGDDVLQRVDIDSFTDDEVVRLATNLKGGIPIATPAFDGAKEKEIKQMLALAGLPESGQLTLCDGRTGNEFERKVTVGYMYMLKLNHLVDDKMHARSTGSYSLVTQQPLGGKAQFGGQRFGEMEVWALEAYGAAYTLQEMLTVKSDDVNGRTQMYKNIVDGNHQMQPGMPESFNVLLKEIRSLGINIELDQE.

The protein belongs to the RNA polymerase beta chain family. The RNAP catalytic core consists of 2 alpha, 1 beta, 1 beta' and 1 omega subunit. When a sigma factor is associated with the core the holoenzyme is formed, which can initiate transcription.

The catalysed reaction is RNA(n) + a ribonucleoside 5'-triphosphate = RNA(n+1) + diphosphate. Its function is as follows. DNA-dependent RNA polymerase catalyzes the transcription of DNA into RNA using the four ribonucleoside triphosphates as substrates. The polypeptide is DNA-directed RNA polymerase subunit beta (Shewanella frigidimarina (strain NCIMB 400)).